The primary structure comprises 63 residues: MATPKAKVSKSRRDKRRAQFTARSKAAETVTCPNCGEPTLPHRACRHCGHYRGRAVTKKSSNS.

Residues 1-23 (MATPKAKVSKSRRDKRRAQFTAR) are disordered. Residues 7–18 (KVSKSRRDKRRA) show a composition bias toward basic residues.

This sequence belongs to the bacterial ribosomal protein bL32 family.

The sequence is that of Large ribosomal subunit protein bL32 from Chlorobium phaeobacteroides (strain BS1).